A 313-amino-acid polypeptide reads, in one-letter code: Glyoxylate/hydroxypyruvate reductase A HPR2 (313 aa).

Residues 152-155, 174-176, 230-232, and aspartate 256 each bind NADP(+); these read LGRI, SRT, and IGR. Arginine 232 is a catalytic residue. The active site involves glutamate 261. Histidine 279 serves as the catalytic Proton donor. Position 279-281 (279-281) interacts with NADP(+); sequence HVG.

It belongs to the D-isomer specific 2-hydroxyacid dehydrogenase family. GyaR subfamily. As to quaternary structure, homodimer.

The protein localises to the cytoplasm. The catalysed reaction is glycolate + NADP(+) = glyoxylate + NADPH + H(+). It catalyses the reaction (R)-glycerate + NAD(+) = 3-hydroxypyruvate + NADH + H(+). The enzyme catalyses (R)-glycerate + NADP(+) = 3-hydroxypyruvate + NADPH + H(+). With respect to regulation, strongly inhibited by oxalate. In terms of biological role, catalyzes the NADPH-dependent reduction of glyoxylate and hydroxypyruvate (HP) into glycolate and glycerate in the cytoplasm, thus providing a cytosolic bypass to the photorespiratory core cycle. Mostly active in the presence of NADPH and hydroxypyruvate. The chain is Glyoxylate/hydroxypyruvate reductase A HPR2 (HPR2) from Arabidopsis thaliana (Mouse-ear cress).